We begin with the raw amino-acid sequence, 260 residues long: MMLIRVLANLLILQLSYAQKSSELVIGGDECNINEHRFLVALYDVWSGDFLCGGTLINKEYVLTAAHCETRNMYIYLGMHNKMYQFDDEQRRYPKKKYFFRCSNNFTRWDKDIMLIRLNRPVRNSEHIAPLSLPSSPPSVGSVCRVMGWGTITSPNETLPDVPRCANINLLNYTVCRGVFPRLPARSRTLCAGVLQGGIDTCKRDSGGPLICNGKLQGVVFWGPKPCAQPRKPALYTKVFDHLDWIQSIIAGNTTVTCPP.

Residues 1-18 (MMLIRVLANLLILQLSYA) form the signal peptide. A propeptide spanning residues 19-24 (QKSSEL) is cleaved from the precursor. Residues 25 to 251 (VIGGDECNIN…HLDWIQSIIA (227 aa)) enclose the Peptidase S1 domain. Intrachain disulfides connect Cys31–Cys165, Cys52–Cys68, Cys102–Cys258, Cys144–Cys212, Cys176–Cys191, and Cys202–Cys227. His67 acts as the Charge relay system in catalysis. Asn105 carries N-linked (GlcNAc...) asparagine glycosylation. Catalysis depends on Asp112, which acts as the Charge relay system. N-linked (GlcNAc...) asparagine glycosylation is found at Asn156 and Asn172. Ser206 acts as the Charge relay system in catalysis. An N-linked (GlcNAc...) asparagine glycan is attached at Asn253.

The protein belongs to the peptidase S1 family. Snake venom subfamily. In terms of assembly, monomer. As to expression, expressed by the venom gland.

It is found in the secreted. In terms of biological role, thrombin-like snake venom serine protease. The protein is Thrombin-like enzyme 2 of Trimeresurus albolabris (White-lipped pit viper).